Consider the following 466-residue polypeptide: Asparagine--tRNA ligase (466 aa).

It belongs to the class-II aminoacyl-tRNA synthetase family. Homodimer.

The protein localises to the cytoplasm. The enzyme catalyses tRNA(Asn) + L-asparagine + ATP = L-asparaginyl-tRNA(Asn) + AMP + diphosphate + H(+). The polypeptide is Asparagine--tRNA ligase (Photorhabdus laumondii subsp. laumondii (strain DSM 15139 / CIP 105565 / TT01) (Photorhabdus luminescens subsp. laumondii)).